The primary structure comprises 473 residues: Poly(A) polymerase catalytic subunit (473 aa).

Active-site residues include Asp-193 and Asp-195.

This sequence belongs to the poxviridae poly(A) polymerase catalytic subunit family. As to quaternary structure, heterodimer of a large (catalytic) subunit and a small (regulatory) subunit.

The catalysed reaction is RNA(n) + ATP = RNA(n)-3'-adenine ribonucleotide + diphosphate. In terms of biological role, polymerase that creates the 3'-poly(A) tail of mRNA's. This Crocodylus johnstoni (Australian freshwater crocodile) protein is Poly(A) polymerase catalytic subunit (PAPL).